Here is a 195-residue protein sequence, read N- to C-terminus: Thymidine kinase (195 aa).

Residues 15 to 22 and 88 to 91 each bind ATP; these read GSMFSGKS and DEVQ. Catalysis depends on glutamate 89, which acts as the Proton acceptor. 4 residues coordinate Zn(2+): cysteine 145, cysteine 148, cysteine 183, and residue 186.

The protein belongs to the thymidine kinase family. Homotetramer.

The protein resides in the cytoplasm. The catalysed reaction is thymidine + ATP = dTMP + ADP + H(+). This chain is Thymidine kinase, found in Bacillus cereus (strain ATCC 10987 / NRS 248).